A 485-amino-acid polypeptide reads, in one-letter code: Pumilio domain-containing protein 6 (485 aa).

Disordered stretches follow at residues 29-48 and 55-76; these read NKTH…PYRH and SDLD…TPPP. A compositionally biased stretch (polar residues) spans 55 to 68; that stretch reads SDLDNYIFNSGSGS. Pumilio repeat units follow at residues 86–124, 125–163, 164–200, 201–236, 237–279, 287–324, 326–361, and 372–411; these read EVLL…AVFE, KLTE…ELLR, QMID…QLIQ, ELST…TFFV, HFLS…FRIQ, CIVR…TIID, CLLR…EMME, and ELNR…RQLP. The interval 439–454 is RNA-binding; it reads FSSGKKIIDSVMRHGV.

Its function is as follows. RNA-binding protein that binds to the consensus sequence 5'-CUCUGUAUCUUGU-3' in mRNA 3'-UTRs and modulates mRNA expression and stability. Functions redundantly with puf-5 and puf-7 in oocyte formation and organization, early embryonic cell divisions, and repression of expression of glp-1 and other maternal mRNAs in late oogenesis. In Caenorhabditis elegans, this protein is Pumilio domain-containing protein 6.